The following is a 417-amino-acid chain: Pelargonidin 3-O-(6-caffeoylglucoside) 5-O-(6-O-malonylglucoside) 4'''-malonyltransferase (417 aa).

Active-site proton acceptor residues include H147 and D360.

The protein belongs to the plant acyltransferase family. In terms of assembly, monomer. In terms of tissue distribution, expressed at higher level in recently opened, fully pigmented flowers.

The enzyme catalyses 4'''-demalonylsalvianin + malonyl-CoA = salvianin + CoA. The protein operates within pigment biosynthesis; anthocyanin biosynthesis. Inhibited by the following metal ions: Cd(2+), Cu(2+), Fe(2+), Hg(2+) and Zn(2+). Activity is strongly inhibited by CoA-SH and partially inhibited by acetyl-CoA, caffeic acid and bisdemalonylsalvianin. Its function is as follows. Catalyzes the transfer of the malonyl group from malonyl-CoA to the 4'''-hydroxyl group of the 5-glucosyl moiety of anthocyanins. Anthocyanins are ubiquitous colored pigments that are responsible for petal color. The protein is Pelargonidin 3-O-(6-caffeoylglucoside) 5-O-(6-O-malonylglucoside) 4'''-malonyltransferase of Salvia splendens (Scarlet sage).